The chain runs to 321 residues: Serine/threonine-protein phosphatase PP1 isozyme 4 (321 aa).

Alanine 2 bears the N-acetylalanine mark. Mn(2+)-binding residues include aspartate 74, histidine 76, aspartate 102, and asparagine 134. Histidine 135 acts as the Proton donor in catalysis. Histidine 183 and histidine 258 together coordinate Mn(2+).

The protein belongs to the PPP phosphatase family. PP-1 subfamily. As to quaternary structure, interacts with the DELLA proteins RGA and GAI. Interacts with PIF3 and PIF5. Interacts with the auxin efflux carrier PIN1. Mn(2+) is required as a cofactor. Expressed in the vasculature of roots and cotyledons, tips of leaves, guard cells, bases of trichomes, pistils and stamen filaments.

The protein resides in the nucleus. The protein localises to the cytoplasm. The enzyme catalyses O-phospho-L-seryl-[protein] + H2O = L-seryl-[protein] + phosphate. It catalyses the reaction O-phospho-L-threonyl-[protein] + H2O = L-threonyl-[protein] + phosphate. Phosphatase activity is strongly reduced by the protein phosphatase inhibitor 2 (I-2). Serine/threonine-protein phosphatase that possesses phosphatase activity toward para-nitrophenyl phosphate (pNPP) in vitro. Acts as a positive regulator in the gibberellin (GA) signaling pathway to regulate plant growth and development. Promotes the GA-induced and proteasomal-dependent degradation of the DELLA proteins RGA and GAI by directly binding and dephosphorylating these proteins. Involved in the regulation of phytochrome B (phyB) signaling pathway that controls photomorphogenesis. Promotes the proteasomal-dependent degradation of PIF5 factor by directly binding and dephosphorylating this protein. Involved in the regulation of pavement cell (PC) interdigitation by modulating the auxin efflux carrier PIN1 polarity and endocytic trafficking. Regulates PIN1 polar targeting through direct binding and dephosphorylation. Acts antagonistically with PID in regulating PC development. The protein is Serine/threonine-protein phosphatase PP1 isozyme 4 of Arabidopsis thaliana (Mouse-ear cress).